An 876-amino-acid chain; its full sequence is MEQSVSARWLKRYRAFFLILLLIVAIQLFLAYKSLDIVGGGSGSGFDAAEAPASPPPPHAQARVQPPARTKLTAQQLGFQPECDILAREAISALQRAKTKDCREHIAQIACAIQAGRFYAPQLRSSCPAGNHTANVSLGCFKDEKDRRLLAGYYSSSKTSNSPAKCVELCLQSGYPYAGVQYGRECFCGYDPPPKASKLPDSSCNTKCLGNAKEICGGFYAMNIYETGIAKFTAQLAATTPSEETKRVRIAFLLTLNGRALRQVHRLLKALYAPEHVYYIHVDERQDYLYRKLLELESKFPNIRLARKRFSTIWGGASLLTMLLQCMEDLLQSNWHWDFVINLSESDFPVKTLDKLVDFLSANPGRNFVKGHGRETQKFIQKQGLDKTFVECDTHMWRIGDRKLPAGIQVDGGSDWVALSRPFVGYVTHPREDDELLQALLKLFRHTLLPAESFFHTVLRNTKHCTSYVDNNLHVTNWKRKQGCKCQYKHVVDWCGCSPNDFKPEDWPRLQATEQKSLFFARKFEPVINQAVLLQLEEWLYGPYTSEYANLHGYWQSLYHHEDVHGSGDDLARSIGDSVMRLSARQAKLYPLELIELTHYLHRDQYKGFLVRYRARGSTGKPLHLETRVRPTQQGKLARNARFSKRLRNFEVSTDFDQKEQIARNFGKLLGPQSDLLLSYTLQANADSGAASHSYNLTLLWIDPLGRLQDFNELHVEDSTSDVINHSKTLLKHPITPGIWTAKLIGRNSIYAQLKFLIAPLAYYKGYPLAKSSDAEALNAGLTVALPEDFEMPVEWQQHLQTDDEQFTMREESLAKGKMLGQELHSWIDGLVGQFFQLRESCVVEADSEVSLPLCSDAPWSSLAPDPKSDVDALLK.

The Cytoplasmic portion of the chain corresponds to 1-14 (MEQSVSARWLKRYR). The chain crosses the membrane as a helical; Signal-anchor for type II membrane protein span at residues 15 to 35 (AFFLILLLIVAIQLFLAYKSL). Over 36 to 876 (DIVGGGSGSG…PKSDVDALLK (841 aa)) the chain is Lumenal. Residues 48–67 (AAEAPASPPPPHAQARVQPP) are disordered. 4 cysteine pairs are disulfide-bonded: Cys83–Cys111, Cys127–Cys465, Cys484–Cys497, and Cys486–Cys495. 2 N-linked (GlcNAc...) asparagine glycosylation sites follow: Asn131 and Asn135. Positions 134 to 228 (ANVSLGCFKD…FYAMNIYETG (95 aa)) constitute a WSC domain. Residues Asp283 and 312 to 314 (TIW) contribute to the UDP-alpha-D-xylose site. N-linked (GlcNAc...) asparagine glycosylation occurs at Asn342. Residue 415 to 416 (DW) participates in UDP-alpha-D-xylose binding. UDP-alpha-D-xylose contacts are provided by residues Ser498 and 522-523 (RK). Residues Asn696 and Asn725 are each glycosylated (N-linked (GlcNAc...) asparagine). A disulfide bond links Cys842 and Cys855.

This sequence belongs to the glycosyltransferase 14 family. XylT subfamily. Ca(2+) is required as a cofactor. Requires Mn(2+) as cofactor. Mg(2+) serves as cofactor.

The protein localises to the endoplasmic reticulum membrane. It localises to the golgi apparatus membrane. The catalysed reaction is UDP-alpha-D-xylose + L-seryl-[protein] = 3-O-(beta-D-xylosyl)-L-seryl-[protein] + UDP + H(+). Its pathway is glycan metabolism; chondroitin sulfate biosynthesis. It participates in glycan metabolism; heparan sulfate biosynthesis. In terms of biological role, catalyzes the first step in biosynthesis of glycosaminoglycan. Transfers D-xylose from UDP-D-xylose to specific serine residues of the core protein. The sequence is that of Xylosyltransferase oxt from Drosophila melanogaster (Fruit fly).